Here is a 74-residue protein sequence, read N- to C-terminus: Apolipoprotein C-I, acidic form (74 aa).

The N-terminal stretch at 1 to 26 is a signal peptide; that stretch reads MRLFLSLPVLVVVLSMVLEGPTPAQG.

Belongs to the apolipoprotein C1 family.

The protein resides in the secreted. This chain is Apolipoprotein C-I, acidic form (APOC1A), found in Colobus guereza (Mantled guereza).